We begin with the raw amino-acid sequence, 230 residues long: Cytidylate kinase (230 aa).

12–20 contacts ATP; it reads GPSGAGKGT.

Belongs to the cytidylate kinase family. Type 1 subfamily.

The protein localises to the cytoplasm. The enzyme catalyses CMP + ATP = CDP + ADP. It carries out the reaction dCMP + ATP = dCDP + ADP. In Yersinia pseudotuberculosis serotype O:1b (strain IP 31758), this protein is Cytidylate kinase.